The chain runs to 1111 residues: Isoleucine--tRNA ligase (1111 aa).

Positions 52–62 (PFANGLPHYGH) match the 'HIGH' region motif. The 'KMSKS' region signature appears at 645-649 (KLSKR). Lys648 provides a ligand contact to ATP.

The protein belongs to the class-I aminoacyl-tRNA synthetase family. IleS type 2 subfamily. In terms of assembly, monomer. Requires Zn(2+) as cofactor.

The protein localises to the cytoplasm. The catalysed reaction is tRNA(Ile) + L-isoleucine + ATP = L-isoleucyl-tRNA(Ile) + AMP + diphosphate. In terms of biological role, catalyzes the attachment of isoleucine to tRNA(Ile). As IleRS can inadvertently accommodate and process structurally similar amino acids such as valine, to avoid such errors it has two additional distinct tRNA(Ile)-dependent editing activities. One activity is designated as 'pretransfer' editing and involves the hydrolysis of activated Val-AMP. The other activity is designated 'posttransfer' editing and involves deacylation of mischarged Val-tRNA(Ile). The sequence is that of Isoleucine--tRNA ligase from Wolbachia pipientis wMel.